The primary structure comprises 233 residues: Small ribosomal subunit protein uS5 (233 aa).

Basic and acidic residues-rich tracts occupy residues 1–12 and 39–54; these read MANESEIQKTEN and RGRD…RNEE. A disordered region spans residues 1 to 54; it reads MANESEIQKTENAEVANAANGTNPNNERRGRGGRGRGGRGRDGRGRRDDRRNEE. Residues 59 to 122 form the S5 DRBM domain; that stretch reads LIEKLVHINR…AAAKKTMIRV (64 aa).

The protein belongs to the universal ribosomal protein uS5 family. In terms of assembly, part of the 30S ribosomal subunit. Contacts proteins S4 and S8.

With S4 and S12 plays an important role in translational accuracy. Functionally, located at the back of the 30S subunit body where it stabilizes the conformation of the head with respect to the body. The protein is Small ribosomal subunit protein uS5 of Zymomonas mobilis subsp. mobilis (strain ATCC 31821 / ZM4 / CP4).